Here is a 444-residue protein sequence, read N- to C-terminus: Tubulin gamma chain (444 aa).

144–150 (SGGTGSG) lines the GTP pocket.

Belongs to the tubulin family.

It localises to the cytoplasm. It is found in the cytoskeleton. The protein localises to the microtubule organizing center. The protein resides in the centrosome. Its subcellular location is the cell junction. It localises to the hemidesmosome. It is found in the adherens junction. Its function is as follows. Tubulin is the major constituent of microtubules. The gamma chain is found at microtubule organizing centers (MTOC) such as the spindle poles or the centrosome, suggesting that it is involved in the minus-end nucleation of microtubule assembly. The sequence is that of Tubulin gamma chain (tbg-1) from Caenorhabditis elegans.